The primary structure comprises 119 residues: UPF0102 protein SGR_1878 (119 aa).

The protein belongs to the UPF0102 family.

The chain is UPF0102 protein SGR_1878 from Streptomyces griseus subsp. griseus (strain JCM 4626 / CBS 651.72 / NBRC 13350 / KCC S-0626 / ISP 5235).